A 195-amino-acid chain; its full sequence is Imidazoleglycerol-phosphate dehydratase (195 aa).

This sequence belongs to the imidazoleglycerol-phosphate dehydratase family.

The protein localises to the cytoplasm. The enzyme catalyses D-erythro-1-(imidazol-4-yl)glycerol 3-phosphate = 3-(imidazol-4-yl)-2-oxopropyl phosphate + H2O. The protein operates within amino-acid biosynthesis; L-histidine biosynthesis; L-histidine from 5-phospho-alpha-D-ribose 1-diphosphate: step 6/9. The sequence is that of Imidazoleglycerol-phosphate dehydratase from Thermotoga maritima (strain ATCC 43589 / DSM 3109 / JCM 10099 / NBRC 100826 / MSB8).